A 186-amino-acid chain; its full sequence is Ribosome-recycling factor (186 aa).

Belongs to the RRF family.

Its subcellular location is the cytoplasm. Functionally, responsible for the release of ribosomes from messenger RNA at the termination of protein biosynthesis. May increase the efficiency of translation by recycling ribosomes from one round of translation to another. This chain is Ribosome-recycling factor, found in Rhizobium leguminosarum bv. trifolii (strain WSM2304).